A 919-amino-acid polypeptide reads, in one-letter code: Tight junction protein ZO-3 (919 aa).

In terms of domain architecture, PDZ 1 spans 11 to 93 (TATLSKDPRR…MANITVKRPR (83 aa)). Residues 92-173 (PRRIHLPATK…SPGGGSEANG (82 aa)) form a disordered region. Residue serine 112 is modified to Phosphoserine. The span at 117 to 131 (GPQRVEEVDQGRGYD) shows a compositional bias: basic and acidic residues. The residue at position 136 (serine 136) is a Phosphoserine. A compositionally biased stretch (basic residues) spans 147-163 (RRPRPGRRGRAGSHGRR). Serine 164, serine 169, serine 203, and serine 319 each carry phosphoserine. A PDZ 2 domain is found at 195–272 (SVLVKRRDSE…KLSLLVLRDR (78 aa)). The segment at 279–377 (IPPAVSDSDS…SSQSMEDRGY (99 aa)) is disordered. Threonine 325 carries the phosphothreonine modification. At serine 327 the chain carries Phosphoserine. Over residues 332 to 360 (PRLRRESSVDSRTISEPDEQRSELPRESS) the composition is skewed to basic and acidic residues. Serine 371 carries the phosphoserine modification. In terms of domain architecture, PDZ 3 spans 380–446 (DTRVVRFLKG…LTREEAVQFL (67 aa)). An SH3 domain is found at 475–549 (GDSFYIRTHF…PNQSRAEQLA (75 aa)). Residues 580 to 761 (LRRGAKKTTQ…WYQELKAIIR (182 aa)) enclose the Guanylate kinase-like domain. Residue serine 591 is modified to Phosphoserine. Residues 791-801 (ADSSADLSCDS) are compositionally biased toward low complexity. Disordered stretches follow at residues 791-886 (ADSS…DSMR) and 899-919 (RVHD…ATDL). Gly residues predominate over residues 812–828 (EGGAYTDGEGYTDGEGG). Phosphoserine is present on residues serine 856, serine 905, and serine 906.

This sequence belongs to the MAGUK family. Interacts with occludin OCLN, claudins and TPJ1. Interacts with PATJ. Interacts with UBN1. Interacts with FASLG. Interacts with CCND1. Phosphorylated.

The protein localises to the cell membrane. Its subcellular location is the cell junction. The protein resides in the tight junction. It is found in the nucleus. Functionally, TJP1, TJP2, and TJP3 are closely related scaffolding proteins that link tight junction (TJ) transmembrane proteins such as claudins, junctional adhesion molecules, and occludin to the actin cytoskeleton. The tight junction acts to limit movement of substances through the paracellular space and as a boundary between the compositionally distinct apical and basolateral plasma membrane domains of epithelial and endothelial cells. Binds and recruits PATJ to tight junctions where it connects and stabilizes apical and lateral components of tight junctions. Promotes cell-cycle progression through the sequestration of cyclin D1 (CCND1) at tight junctions during mitosis which prevents CCND1 degradation during M-phase and enables S-phase transition. With TJP1 and TJP2, participates in the junctional retention and stability of the transcription factor DBPA, but is not involved in its shuttling to the nucleus. Contrary to TJP2, TJP3 is dispensable for individual viability, embryonic development, epithelial differentiation, and the establishment of TJs, at least in the laboratory environment. The chain is Tight junction protein ZO-3 (TJP3) from Homo sapiens (Human).